The following is a 45-amino-acid chain: Large ribosomal subunit protein bL34 (45 aa).

It belongs to the bacterial ribosomal protein bL34 family.

The sequence is that of Large ribosomal subunit protein bL34 from Prochlorococcus marinus (strain MIT 9313).